The chain runs to 310 residues: Glutaminase (310 aa).

Substrate contacts are provided by serine 66, asparagine 117, glutamate 161, asparagine 168, tyrosine 192, tyrosine 244, and valine 262. N6-acetyllysine is present on lysine 294.

The protein belongs to the glutaminase family. As to quaternary structure, homotetramer.

The catalysed reaction is L-glutamine + H2O = L-glutamate + NH4(+). The protein is Glutaminase of Escherichia coli O81 (strain ED1a).